The sequence spans 546 residues: Cysteine desulfurase SufS (546 aa).

An N-terminal signal peptide occupies residues 1–22 (MLRGPRCLYIYLFFVFLPFSFC). Position 291 is an N6-(pyridoxal phosphate)lysine (K291). Catalysis depends on C497, which acts as the Cysteine persulfide intermediate.

It belongs to the class-V pyridoxal-phosphate-dependent aminotransferase family. Csd subfamily. In terms of assembly, monomer. Interacts with SufE; interaction enhances cysteine desulfurase activity of SufS. The cofactor is pyridoxal 5'-phosphate. Proteolytically cleaved.

Its subcellular location is the plastid. The protein resides in the apicoplast. The catalysed reaction is (sulfur carrier)-H + L-cysteine = (sulfur carrier)-SH + L-alanine. It participates in cofactor biosynthesis; iron-sulfur cluster biosynthesis. Catalyzes sulfur activation and mobilization in sulfur mobilization (SUF) pathway for iron-sulfur (Fe-S) cluster biogenesis. Active when in complex with a partner protein SufE. Required for apicoplast maintenance. Plays a role in the development of sporozoites in oocysts in mosquitoes. May provide sulfur for MNMA-mediated tRNA modifications. The chain is Cysteine desulfurase SufS from Plasmodium falciparum (isolate 3D7).